Here is a 403-residue protein sequence, read N- to C-terminus: Na(+)-translocating NADH-quinone reductase subunit B (403 aa).

Transmembrane regions (helical) follow at residues 56–76, 121–141, 163–183, 220–240, 258–278, 287–307, 312–332, 348–368, and 371–391; these read MMIT…WNTG, AYFL…EVLF, ILPP…GVVI, WTAV…AGGI, IHGS…AVLI, IVTG…LIGS, LFGM…GMIF, WVFG…NPAF, and GMML…HFVI. An FMN phosphoryl threonine modification is found at threonine 230.

Belongs to the NqrB/RnfD family. In terms of assembly, composed of six subunits; NqrA, NqrB, NqrC, NqrD, NqrE and NqrF. FMN serves as cofactor.

Its subcellular location is the cell inner membrane. The enzyme catalyses a ubiquinone + n Na(+)(in) + NADH + H(+) = a ubiquinol + n Na(+)(out) + NAD(+). Functionally, NQR complex catalyzes the reduction of ubiquinone-1 to ubiquinol by two successive reactions, coupled with the transport of Na(+) ions from the cytoplasm to the periplasm. NqrA to NqrE are probably involved in the second step, the conversion of ubisemiquinone to ubiquinol. This is Na(+)-translocating NADH-quinone reductase subunit B from Stutzerimonas stutzeri (strain A1501) (Pseudomonas stutzeri).